Reading from the N-terminus, the 405-residue chain is Teichoic acid D-alanyltransferase (405 aa).

Over 1 to 9 (MLNLQPYEN) the chain is Extracellular. Residues 10 to 29 (PQYFVYLIIALLPVIIGMFK) traverse the membrane as a helical segment. Residues 30-33 (GFRM) are Cytoplasmic-facing. The chain crosses the membrane as a helical span at residues 34 to 49 (HWYESIFSLVFLVLIF). At 50-53 (DADK) the chain is on the extracellular side. The chain crosses the membrane as a helical span at residues 54–80 (WPQGKALLGYVVFNLLLVYAYFKYRTR). Topologically, residues 81 to 86 (EGSKNS) are cytoplasmic. A helical membrane pass occupies residues 87-111 (TAVFYLSVALGIAHVAVVKFTPLFQ). Over 112–121 (HHGSILGFLG) the chain is Extracellular. Residues 122–138 (ISYLTFRVVGTIMEIRD) traverse the membrane as a helical segment. Residues 139 to 145 (GSIKDLN) lie on the Cytoplasmic side of the membrane. Residues 146–175 (MWKFIQFLLFFPTISSGPIDRYRRFVKDYD) lie within the membrane without spanning it. The Cytoplasmic portion of the chain corresponds to 176-179 (RVPD). The helical transmembrane segment at 180–223 (PEHYAQLVTKAIHYLMLGFLYKFILGYIFGTLWLPSVEHMAMAS) threads the bilayer. Over 224 to 232 (RGGAFLGLS) the chain is Extracellular. Residues 233–264 (WPVVGVMYAYSGYLFFDFAGYSLFAVAISYLM) form a helical membrane-spanning segment. Residues 265 to 274 (GIETPMNFNK) lie on the Cytoplasmic side of the membrane. The stretch at 275 to 310 (PWSHITSRLLNRWQLSLSFWFRDYIYMRFVFFMMKH) is an intramembrane region. The Cytoplasmic portion of the chain corresponds to 311-315 (KWIKS). Residues 316-335 (RVWTAFVGYLVLFLIMGIWH) form a helical membrane-spanning segment. Residue H335 is part of the active site. Topologically, residues 336 to 338 (GET) are extracellular. The chain crosses the membrane as a helical span at residues 339–372 (WYYIVYGLFHAMLINLTDAWLRFKKKHKDFFPHN). Residues 373–378 (RATHYP) lie on the Cytoplasmic side of the membrane. The helical transmembrane segment at 379 to 399 (SPFSMTANAVCFSFLIFSGFL) threads the bilayer. Over 400 to 405 (DKLWFH) the chain is Extracellular.

This sequence belongs to the membrane-bound acyltransferase family.

Its subcellular location is the cell membrane. It participates in cell wall biogenesis; lipoteichoic acid biosynthesis. Its function is as follows. O-acyltransferase that catalyzes D-alanylation of both teichoic acid and lipoteichoic acid (LTA). D-alanylation of LTA plays an important role in modulating the properties of the cell wall in Gram-positive bacteria, influencing the net charge of the cell wall. Catalyzes D-alanylation from DltC carrier protein. This is Teichoic acid D-alanyltransferase from Lacticaseibacillus rhamnosus (Lactobacillus rhamnosus).